Reading from the N-terminus, the 143-residue chain is Hemoglobin subunit alpha (143 aa).

Positions threonine 2 to arginine 143 constitute a Globin domain. Histidine 60 lines the O2 pocket. Histidine 89 provides a ligand contact to heme b.

The protein belongs to the globin family. Heterotetramer of two alpha chains and two beta chains. As to expression, red blood cells.

Its function is as follows. Involved in oxygen transport from gills to the various peripheral tissues. This chain is Hemoglobin subunit alpha (hba), found in Thunnus thynnus (Atlantic bluefin tuna).